A 697-amino-acid chain; its full sequence is SPX domain-containing membrane protein At1g63010 (697 aa).

The region spanning 2–145 (VAFGKYLQRK…GYRFADYYVK (144 aa)) is the SPX domain. 6 helical membrane-spanning segments follow: residues 247-267 (FNSL…TYII), 278-298 (LGAA…AQVF), 315-335 (LVFS…AYDA), 337-356 (SIAL…ARAV), 375-395 (AGFV…AGLL), and 411-431 (LPGW…CISF). A disordered region spans residues 439–459 (EDGEKNNRNETTSDRVESSRV). Transmembrane regions (helical) follow at residues 513–533 (LLIY…SSVI), 544–564 (SVAI…ILVG), 576–596 (ILLT…NLFV), 604–624 (VISG…NLSL), and 670–690 (LLNA…VATC).

The protein belongs to the major facilitator superfamily.

It is found in the membrane. The polypeptide is SPX domain-containing membrane protein At1g63010 (Arabidopsis thaliana (Mouse-ear cress)).